Reading from the N-terminus, the 216-residue chain is Adenylate kinase (216 aa).

10–15 (GAGKGT) is a binding site for ATP. The NMP stretch occupies residues 30 to 59 (STGDIFRANIKEKTPLGIEAKRYMDNGQLV). Residues Thr-31, Arg-36, 57–59 (QLV), 85–88 (GFPR), and Gln-92 contribute to the AMP site. Residues 126 to 163 (GRRVCTSCGASYHIRFNPPKIEGKCDICDNELIQRKDD) are LID. Arg-127 is an ATP binding site. The Zn(2+) site is built by Cys-130 and Cys-133. 136–137 (SY) is an ATP binding site. 2 residues coordinate Zn(2+): Cys-150 and Cys-153. Residues Arg-160 and Arg-171 each contribute to the AMP site. Glu-199 lines the ATP pocket.

This sequence belongs to the adenylate kinase family. As to quaternary structure, monomer.

It localises to the cytoplasm. The catalysed reaction is AMP + ATP = 2 ADP. Its pathway is purine metabolism; AMP biosynthesis via salvage pathway; AMP from ADP: step 1/1. In terms of biological role, catalyzes the reversible transfer of the terminal phosphate group between ATP and AMP. Plays an important role in cellular energy homeostasis and in adenine nucleotide metabolism. This is Adenylate kinase from Clostridium botulinum (strain Loch Maree / Type A3).